A 1109-amino-acid chain; its full sequence is Protein argonaute 3 (1109 aa).

Over residues 1 to 13 (MAGRGGRDPRRGY) the composition is skewed to basic and acidic residues. Disordered regions lie at residues 1–83 (MAGR…GLVR) and 125–220 (DHRD…PLSK). Gly residues-rich tracts occupy residues 14–30 (DGGY…GGTN), 37–54 (RGGG…GGRG), and 62–83 (DVLG…GLVR). Residues 125–134 (DHRDQHDHQS) show a composition bias toward basic and acidic residues. Residues 135 to 161 (QRHHHRHHHHQRQRHHHHHQRQQRRGS) show a composition bias toward basic residues. The region spanning 411 to 521 (SVLDLVKTMK…VPIEFCNIPE (111 aa)) is the PAZ domain. Residues 527–545 (VARLDDKKSDNKGEQEKPS) are compositionally biased toward basic and acidic residues. The interval 527–548 (VARLDDKKSDNKGEQEKPSTKT) is disordered. Residues 720–1023 (LLFCPMLNRC…AAYRGRLYYE (304 aa)) form the Piwi domain.

Belongs to the argonaute family. Ago subfamily.

Functionally, probably involved in the RNA silencing pathway. May bind to short RNAs such as microRNAs (miRNAs) or short interfering RNAs (siRNAs), and represses the translation of mRNAs which are complementary to them. The polypeptide is Protein argonaute 3 (AGO3) (Oryza sativa subsp. japonica (Rice)).